The primary structure comprises 582 residues: Leucine-rich repeat protein SHOC-2 (582 aa).

Basic and acidic residues-rich tracts occupy residues 1 to 29 and 36 to 57; these read MSSS…KESK and KESK…KKES. Residues 1 to 88 are disordered; the sequence is MSSSLGKEKD…PGTRKKSSNA (88 aa). The short motif at 63-66 is the RVxF motif; important for interaction with PP1c element; it reads GVAF. 20 LRR repeats span residues 101–122, 124–145, 147–169, 170–191, 193–215, 216–237, 239–260, 262–283, 285–307, 308–329, 332–353, 356–377, 380–400, 403–424, 426–448, 449–470, 472–494, 495–516, 518–540, and 542–563; these read NSMR…VKEL, QLTE…VGCL, NLMT…DNLK, KLRM…VYRL, SLTT…KNLP, KLSM…IGEL, NLIT…IGNC, QITN…IGNL, SLNR…AKCS, ALEE…LLSS, KLNS…GPSQ, TIYS…IFSR, VLSK…DFGT, SMVE…VSGL, SLEV…GNLR, KLRE…IAYL, DLQK…GHLT, NLTH…IGTL, NLEE…LALC, and KLSI…IVAG.

It belongs to the SHOC2 family. In terms of assembly, component of the SHOC2-MRAS-PP1c (SMP) complex consisting of SHOC2, GTP-bound M-Ras/MRAS and the catalytic subunit of protein phosphatase 1 (either PPP1CA, PPP1CB or PPP1CC). SHOC2 and PP1c preferably bind M-Ras/MRAS, but they also bind K-Ras/KRAS, N-Ras/NRAS and H-Ras/HRAS; these interactions are GTP-dependent and both SHOC2 and PP1c are required to form a stable complex. Interacts with PP1c in the absence of Ras GTPases. Interacts with M-Ras/MRAS and RAF1. Interacts with ERBIN; disrupts the interaction with RAF1 and Ras, preventing the activation of the Ras signaling pathway. Interacts with LZTR1.

The protein localises to the cytoplasm. It localises to the nucleus. Core component of the SHOC2-MRAS-PP1c (SMP) holophosphatase complex that regulates activation of the MAPK pathway. Acts as a scaffolding protein in the SMP complex. The SMP complex specifically dephosphorylates the inhibitory phosphorylation at 'Ser-259' of RAF1 kinase, 'Ser-365' of BRAF kinase and 'Ser-214' of ARAF kinase, stimulating their kinase activities. The SMP complex enhances the dephosphorylation activity and substrate specificity of PP1c. The sequence is that of Leucine-rich repeat protein SHOC-2 (Shoc2) from Mus musculus (Mouse).